Consider the following 479-residue polypeptide: Ribulose bisphosphate carboxylase large chain (479 aa).

Residues 1 to 2 (MS) constitute a propeptide that is removed on maturation. Residues Asn-123 and Thr-173 each coordinate substrate. The active-site Proton acceptor is Lys-175. Residue Lys-177 coordinates substrate. Residues Lys-201, Asp-203, and Glu-204 each coordinate Mg(2+). Lys-201 is subject to N6-carboxylysine. A Phosphoserine modification is found at Ser-208. The Proton acceptor role is filled by His-294. Residues Arg-295 and His-327 each contribute to the substrate site. Thr-330 carries the post-translational modification Phosphothreonine. Ser-379 provides a ligand contact to substrate.

It belongs to the RuBisCO large chain family. Type I subfamily. In terms of assembly, heterohexadecamer of 8 large chains and 8 small chains; disulfide-linked. The disulfide link is formed within the large subunit homodimers. The cofactor is Mg(2+). The disulfide bond which can form in the large chain dimeric partners within the hexadecamer appears to be associated with oxidative stress and protein turnover.

Its subcellular location is the plastid. It localises to the chloroplast. It carries out the reaction 2 (2R)-3-phosphoglycerate + 2 H(+) = D-ribulose 1,5-bisphosphate + CO2 + H2O. The enzyme catalyses D-ribulose 1,5-bisphosphate + O2 = 2-phosphoglycolate + (2R)-3-phosphoglycerate + 2 H(+). RuBisCO catalyzes two reactions: the carboxylation of D-ribulose 1,5-bisphosphate, the primary event in carbon dioxide fixation, as well as the oxidative fragmentation of the pentose substrate in the photorespiration process. Both reactions occur simultaneously and in competition at the same active site. In Crucihimalaya wallichii (Rock-cress), this protein is Ribulose bisphosphate carboxylase large chain.